A 176-amino-acid polypeptide reads, in one-letter code: Large ribosomal subunit protein eL20 (176 aa).

This sequence belongs to the eukaryotic ribosomal protein eL20 family. Component of the large ribosomal subunit.

Its subcellular location is the cytoplasm. Functionally, component of the large ribosomal subunit. The ribosome is a large ribonucleoprotein complex responsible for the synthesis of proteins in the cell. This is Large ribosomal subunit protein eL20 (rpl18a) from Salmo salar (Atlantic salmon).